Consider the following 77-residue polypeptide: Small ribosomal subunit protein bS20 (77 aa).

The tract at residues 47–77 (ASSSIDKAESKGLIHKNKASRDKARLAAKLG) is disordered.

The protein belongs to the bacterial ribosomal protein bS20 family.

In terms of biological role, binds directly to 16S ribosomal RNA. The chain is Small ribosomal subunit protein bS20 from Streptococcus pyogenes serotype M1.